The sequence spans 366 residues: Prostaglandin F2-alpha receptor (366 aa).

Over 1-31 (MSMNSSKQPVSPAAGLIANTTCQTENRLSVF) the chain is Extracellular. Asn4 and Asn19 each carry an N-linked (GlcNAc...) asparagine glycan. The chain crosses the membrane as a helical span at residues 32-55 (FSIIFMTVGILSNSLAIAILMKAY). At 56 to 69 (QRFRQKSKASFLLL) the chain is on the cytoplasmic side. A helical transmembrane segment spans residues 70 to 90 (ASGLVITDFFGHLINGGIAVF). Residues 91 to 109 (VYASDKDWIRFDQSNILCS) are Extracellular-facing. Residues Cys108 and Cys186 are joined by a disulfide bond. Residues 110-131 (IFGISMVFSGLCPLFLGSAMAI) form a helical membrane-spanning segment. The Cytoplasmic segment spans residues 132–152 (ERCIGVTNPIFHSTKITSKHV). Residues 153–175 (KMILSGVCMFAVFVAVLPILGHR) traverse the membrane as a helical segment. The Extracellular segment spans residues 176 to 198 (DYQIQASRTWCFYNTEHIEDWED). A helical membrane pass occupies residues 199–224 (RFYLLFFSFLGLLALGVSFSCNAVTG). The Cytoplasmic segment spans residues 225 to 250 (VTLLRVKFRSQQHRQGRSHHLEMIIQ). Residues 251-267 (LLAIMCVSCVCWSPFLV) traverse the membrane as a helical segment. Over 268-285 (TMANIAINGNNSPVTCET) the chain is Extracellular. A helical membrane pass occupies residues 286–307 (TLFALRMATWNQILDPWVYILL). The Cytoplasmic portion of the chain corresponds to 308 to 366 (RKAVLRNLYKLASRCCGVNIISLHIWELSSIKNSLKVAAISESPAAEKESQQASSEAGL).

This sequence belongs to the G-protein coupled receptor 1 family.

The protein resides in the cell membrane. In terms of biological role, receptor for prostaglandin F2-alpha (PGF2-alpha). The activity of this receptor is mediated by G proteins which activate a phosphatidylinositol-calcium second messenger system. Initiates luteolysis in the corpus luteum. This is Prostaglandin F2-alpha receptor (Ptgfr) from Mus musculus (Mouse).